The chain runs to 766 residues: Serine/threonine-protein kinase tousled-like 1 (766 aa).

Met-1 bears the N-acetylmethionine mark. The span at 1–19 shows a compositional bias: polar residues; sequence MSVQSSSGSLEGPPSWSQL. The disordered stretch occupies residues 1–197; sequence MSVQSSSGSL…SPSPTALAFG (197 aa). Low complexity predominate over residues 20 to 33; that stretch reads STSPTPGSAAAARS. Thr-38 carries the post-translational modification Phosphothreonine. Positions 43–64 are enriched in basic and acidic residues; that stretch reads RPREGAMDELHSLDPRRQELLE. Residues Ser-54, Ser-77, and Ser-80 each carry the phosphoserine modification. The span at 68 to 85 shows a compositional bias: low complexity; it reads TGVASGSTGSTGSCSVGA. Over residues 87 to 103 the composition is skewed to polar residues; that stretch reads ASTNNESSNHSFGSLGS. The span at 105–121 shows a compositional bias: basic and acidic residues; the sequence is SDKESETPEKKQSESSR. 4 positions are modified to phosphoserine: Ser-134, Ser-159, Ser-174, and Ser-176. Over residues 170 to 192 the composition is skewed to low complexity; sequence SPQNSHSHSTPSSSVRPNSPSPT. A coiled-coil region spans residues 230–281; it reads QDLEKKEGRIDDLLRANCDLRRQIDEQQKLLEKYKERLNKCISMSKKLLIEK. The segment at 346–383 is disordered; it reads LAKRKPPTANNSQAPSTNSEPKQRKNKAVNGAENDPFV. Residues 353 to 365 are compositionally biased toward polar residues; that stretch reads TANNSQAPSTNSE. Residues 397–445 are a coiled coil; sequence HEQEEIFKLRLGHLKKEEAEIQAELERLERVRNLHIRELKRINNEDNSQ. In terms of domain architecture, Protein kinase spans 456–734; sequence YLLLHLLGRG…VHQLANDPYL (279 aa). ATP is bound by residues 462–470 and Lys-485; that span reads LGRGGFSEV. The Proton acceptor role is filled by Asp-586. A Phosphoserine modification is found at Ser-743.

This sequence belongs to the protein kinase superfamily. Ser/Thr protein kinase family. Heterodimer with TLK2. Mg(2+) is required as a cofactor. As to expression, widely expressed. Present in fetal placenta, liver, kidney and pancreas but not heart or skeletal muscle. Also found in adult cell lines. Isoform 3 is ubiquitously expressed in all tissues examined.

Its subcellular location is the nucleus. The enzyme catalyses L-seryl-[protein] + ATP = O-phospho-L-seryl-[protein] + ADP + H(+). It catalyses the reaction L-threonyl-[protein] + ATP = O-phospho-L-threonyl-[protein] + ADP + H(+). Its activity is regulated as follows. Cell-cycle regulated, maximal activity in S-phase. Inactivated by phosphorylation at Ser-743, potentially by CHEK1. Functionally, rapidly and transiently inhibited by phosphorylation following the generation of DNA double-stranded breaks during S-phase. This is cell cycle checkpoint and ATM-pathway dependent and appears to regulate processes involved in chromatin assembly. Isoform 3 phosphorylates and enhances the stability of the t-SNARE SNAP23, augmenting its assembly with syntaxin. Isoform 3 protects the cells from the ionizing radiation by facilitating the repair of DSBs. In vitro, phosphorylates histone H3 at 'Ser-10'. The polypeptide is Serine/threonine-protein kinase tousled-like 1 (TLK1) (Homo sapiens (Human)).